Reading from the N-terminus, the 2209-residue chain is Kinetochore-associated protein 1 (2209 aa).

Thr-13 is modified (phosphothreonine; by TTK). A Phosphoserine; by TTK modification is found at Ser-15. At Thr-1035 the chain carries Phosphothreonine. Residue Ser-1045 is modified to Phosphoserine.

In terms of assembly, interacts with ZW10; the interaction is required for stable association with the kinetochore. Component of the RZZ complex composed of KNTC1/ROD, ZW10 and ZWILCH; in the complex interacts directly with ZWILCH. High expression in testis.

The protein resides in the cytoplasm. It is found in the nucleus. It localises to the chromosome. Its subcellular location is the centromere. The protein localises to the kinetochore. The protein resides in the cytoskeleton. It is found in the spindle. In terms of biological role, essential component of the mitotic checkpoint, which prevents cells from prematurely exiting mitosis. Required for the assembly of the dynein-dynactin and MAD1-MAD2 complexes onto kinetochores. Its function related to the spindle assembly machinery is proposed to depend on its association in the mitotic RZZ complex. The chain is Kinetochore-associated protein 1 (KNTC1) from Homo sapiens (Human).